Consider the following 965-residue polypeptide: Isoleucine--tRNA ligase (965 aa).

Residues 68–78 (PYANGSLHMGH) carry the 'HIGH' region motif. Position 582 (E582) interacts with L-isoleucyl-5'-AMP. The short motif at 623 to 627 (KMSKS) is the 'KMSKS' region element. Residue K626 coordinates ATP. Zn(2+)-binding residues include C936, C939, C956, and C959.

It belongs to the class-I aminoacyl-tRNA synthetase family. IleS type 1 subfamily. In terms of assembly, monomer. It depends on Zn(2+) as a cofactor.

The protein localises to the cytoplasm. It carries out the reaction tRNA(Ile) + L-isoleucine + ATP = L-isoleucyl-tRNA(Ile) + AMP + diphosphate. Catalyzes the attachment of isoleucine to tRNA(Ile). As IleRS can inadvertently accommodate and process structurally similar amino acids such as valine, to avoid such errors it has two additional distinct tRNA(Ile)-dependent editing activities. One activity is designated as 'pretransfer' editing and involves the hydrolysis of activated Val-AMP. The other activity is designated 'posttransfer' editing and involves deacylation of mischarged Val-tRNA(Ile). The polypeptide is Isoleucine--tRNA ligase (Prochlorococcus marinus (strain MIT 9515)).